Here is a 552-residue protein sequence, read N- to C-terminus: Dihydroxy-acid dehydratase (552 aa).

Asp78 provides a ligand contact to Mg(2+). Cys119 lines the [2Fe-2S] cluster pocket. Mg(2+)-binding residues include Asp120 and Lys121. Lys121 is modified (N6-carboxylysine). Position 191 (Cys191) interacts with [2Fe-2S] cluster. Glu442 provides a ligand contact to Mg(2+). The Proton acceptor role is filled by Ser468.

Belongs to the IlvD/Edd family. As to quaternary structure, homodimer. The cofactor is [2Fe-2S] cluster. It depends on Mg(2+) as a cofactor.

The enzyme catalyses (2R)-2,3-dihydroxy-3-methylbutanoate = 3-methyl-2-oxobutanoate + H2O. It catalyses the reaction (2R,3R)-2,3-dihydroxy-3-methylpentanoate = (S)-3-methyl-2-oxopentanoate + H2O. The protein operates within amino-acid biosynthesis; L-isoleucine biosynthesis; L-isoleucine from 2-oxobutanoate: step 3/4. It functions in the pathway amino-acid biosynthesis; L-valine biosynthesis; L-valine from pyruvate: step 3/4. Functionally, functions in the biosynthesis of branched-chain amino acids. Catalyzes the dehydration of (2R,3R)-2,3-dihydroxy-3-methylpentanoate (2,3-dihydroxy-3-methylvalerate) into 2-oxo-3-methylpentanoate (2-oxo-3-methylvalerate) and of (2R)-2,3-dihydroxy-3-methylbutanoate (2,3-dihydroxyisovalerate) into 2-oxo-3-methylbutanoate (2-oxoisovalerate), the penultimate precursor to L-isoleucine and L-valine, respectively. The chain is Dihydroxy-acid dehydratase from Clostridium botulinum (strain Alaska E43 / Type E3).